We begin with the raw amino-acid sequence, 549 residues long: FERM domain-containing protein 1 (549 aa).

Residues 1–40 (MAVPPRGRGIDPARTNPDTFPPSGARCMEPSPERPACSQQ) are disordered. Residues 54–369 (RDVLVLLPSR…DELELDLASR (316 aa)) enclose the FERM domain. Disordered stretches follow at residues 377-400 (SSQH…YTSG) and 422-464 (HGLH…GQSA). Residues 430–443 (SSSPRTSRSHPSTR) show a composition bias toward low complexity. The segment covering 444 to 462 (GDSQATRQEPCTQVRTRGQ) has biased composition (polar residues).

This Homo sapiens (Human) protein is FERM domain-containing protein 1 (FRMD1).